The following is a 124-amino-acid chain: Large ribosomal subunit protein eL22z (124 aa).

This sequence belongs to the eukaryotic ribosomal protein eL22 family.

In Arabidopsis thaliana (Mouse-ear cress), this protein is Large ribosomal subunit protein eL22z (RPL22B).